Consider the following 447-residue polypeptide: Argininosuccinate synthase (447 aa).

Residues 17-25 and Ala43 each bind ATP; that span reads AFSGGLDTS. L-citrulline is bound at residue Tyr99. Positions 129 and 131 each coordinate ATP. L-aspartate-binding residues include Thr131, Asn135, and Asp136. Asn135 contributes to the L-citrulline binding site. Position 136 (Asp136) interacts with ATP. Positions 139 and 192 each coordinate L-citrulline. Asp194 serves as a coordination point for ATP. Thr201, Glu203, and Glu280 together coordinate L-citrulline.

This sequence belongs to the argininosuccinate synthase family. Type 2 subfamily. In terms of assembly, homotetramer.

It is found in the cytoplasm. The enzyme catalyses L-citrulline + L-aspartate + ATP = 2-(N(omega)-L-arginino)succinate + AMP + diphosphate + H(+). It functions in the pathway amino-acid biosynthesis; L-arginine biosynthesis; L-arginine from L-ornithine and carbamoyl phosphate: step 2/3. The polypeptide is Argininosuccinate synthase (Shigella flexneri serotype 5b (strain 8401)).